The primary structure comprises 904 residues: Protein translocase subunit SecA (904 aa).

Residues glutamine 89, 107–111, and aspartate 502 each bind ATP; that span reads GEGKT. Zn(2+)-binding residues include cysteine 886, cysteine 888, cysteine 897, and histidine 898.

It belongs to the SecA family. As to quaternary structure, monomer and homodimer. Part of the essential Sec protein translocation apparatus which comprises SecA, SecYEG and auxiliary proteins SecDF-YajC and YidC. Zn(2+) serves as cofactor.

It is found in the cell inner membrane. It localises to the cytoplasm. The enzyme catalyses ATP + H2O + cellular proteinSide 1 = ADP + phosphate + cellular proteinSide 2.. In terms of biological role, part of the Sec protein translocase complex. Interacts with the SecYEG preprotein conducting channel. Has a central role in coupling the hydrolysis of ATP to the transfer of proteins into and across the cell membrane, serving both as a receptor for the preprotein-SecB complex and as an ATP-driven molecular motor driving the stepwise translocation of polypeptide chains across the membrane. This Rhizobium etli (strain CIAT 652) protein is Protein translocase subunit SecA.